A 508-amino-acid chain; its full sequence is Photosystem II CP47 reaction center protein (508 aa).

6 consecutive transmembrane segments (helical) span residues 21-36 (SVHIMHTALVAGWAGS), 101-115 (IVFSGLCFLAAIWHW), 140-156 (GIHLFLSGVACFGFGVF), 203-218 (IAAGTLGILAGLFHLS), 237-252 (VLSSSIAAVFFAAFVV), and 457-472 (SFALLFFFGHIWHGAR).

This sequence belongs to the PsbB/PsbC family. PsbB subfamily. As to quaternary structure, PSII is composed of 1 copy each of membrane proteins PsbA, PsbB, PsbC, PsbD, PsbE, PsbF, PsbH, PsbI, PsbJ, PsbK, PsbL, PsbM, PsbT, PsbX, PsbY, PsbZ, Psb30/Ycf12, at least 3 peripheral proteins of the oxygen-evolving complex and a large number of cofactors. It forms dimeric complexes. Binds multiple chlorophylls. PSII binds additional chlorophylls, carotenoids and specific lipids. serves as cofactor.

It is found in the plastid. The protein resides in the chloroplast thylakoid membrane. Its function is as follows. One of the components of the core complex of photosystem II (PSII). It binds chlorophyll and helps catalyze the primary light-induced photochemical processes of PSII. PSII is a light-driven water:plastoquinone oxidoreductase, using light energy to abstract electrons from H(2)O, generating O(2) and a proton gradient subsequently used for ATP formation. The polypeptide is Photosystem II CP47 reaction center protein (Jasminum nudiflorum (Winter jasmine)).